Reading from the N-terminus, the 365-residue chain is S-adenosylmethionine:tRNA ribosyltransferase-isomerase (365 aa).

This sequence belongs to the QueA family. Monomer.

It localises to the cytoplasm. The catalysed reaction is 7-aminomethyl-7-carbaguanosine(34) in tRNA + S-adenosyl-L-methionine = epoxyqueuosine(34) in tRNA + adenine + L-methionine + 2 H(+). It participates in tRNA modification; tRNA-queuosine biosynthesis. Its function is as follows. Transfers and isomerizes the ribose moiety from AdoMet to the 7-aminomethyl group of 7-deazaguanine (preQ1-tRNA) to give epoxyqueuosine (oQ-tRNA). The polypeptide is S-adenosylmethionine:tRNA ribosyltransferase-isomerase (Helicobacter hepaticus (strain ATCC 51449 / 3B1)).